A 378-amino-acid chain; its full sequence is 3-ketosteroid-9-alpha-monooxygenase, oxygenase component (378 aa).

The region spanning 26–128 (WHCIGLAKDF…TMERNGVLFV (103 aa)) is the Rieske domain. [2Fe-2S] cluster-binding residues include Cys67, His69, Cys86, and His89. Fe cation contacts are provided by Asn175, His181, His186, and Asp305.

Homotrimer. The two-component system 3-ketosteroid-9-alpha-monooxygenase is composed of an oxygenase component KshA and a reductase component KshB. The cofactor is [2Fe-2S] cluster. Fe cation is required as a cofactor.

The catalysed reaction is androsta-1,4-diene-3,17-dione + 2 reduced [2Fe-2S]-[ferredoxin] + O2 + 2 H(+) = 9alpha-hydroxyandrosta-1,4-diene-3,17-dione + 2 oxidized [2Fe-2S]-[ferredoxin] + H2O. With respect to regulation, KSH activity is completely inhibited by zinc ions. KshA is specifically inhibited by Fe(3+), Co(2+), Zn(2+) and Ni(2+) ions. In terms of biological role, in vitro, catalyzes the introduction of a 9alpha-hydroxyl moiety into the ring B of 3-ketosteroid substrates such as 1,4-androstadiene-3,17-dione (ADD), 4-androstene-3,17-dione (AD), 4-androstene-17beta-ol-3-one (testosterone), 4-pregnene-3,20-dione (progesterone), 19-nor-4-androstene-3,17-dione (nordion), 1-(5alpha)-androstene-3,17-dione, 5alpha-androstane-3,17-dione and 5beta-androstane-3,17-dione. KSH has the highest activity with 3-keto-delta4 steroid substrates. The polypeptide is 3-ketosteroid-9-alpha-monooxygenase, oxygenase component (Rhodococcus rhodochrous).